Here is a 296-residue protein sequence, read N- to C-terminus: Ribosomal RNA small subunit methyltransferase A (296 aa).

6 residues coordinate S-adenosyl-L-methionine: asparagine 32, leucine 34, glycine 59, glutamate 80, aspartate 105, and asparagine 130.

Belongs to the class I-like SAM-binding methyltransferase superfamily. rRNA adenine N(6)-methyltransferase family. RsmA subfamily.

It is found in the cytoplasm. It catalyses the reaction adenosine(1518)/adenosine(1519) in 16S rRNA + 4 S-adenosyl-L-methionine = N(6)-dimethyladenosine(1518)/N(6)-dimethyladenosine(1519) in 16S rRNA + 4 S-adenosyl-L-homocysteine + 4 H(+). Functionally, specifically dimethylates two adjacent adenosines (A1518 and A1519) in the loop of a conserved hairpin near the 3'-end of 16S rRNA in the 30S particle. May play a critical role in biogenesis of 30S subunits. This Levilactobacillus brevis (strain ATCC 367 / BCRC 12310 / CIP 105137 / JCM 1170 / LMG 11437 / NCIMB 947 / NCTC 947) (Lactobacillus brevis) protein is Ribosomal RNA small subunit methyltransferase A.